The following is a 274-amino-acid chain: tRNA-cytidine(32) 2-sulfurtransferase (274 aa).

The PP-loop motif signature appears at 40–45 (SGGKDS). 3 residues coordinate [4Fe-4S] cluster: cysteine 115, cysteine 118, and cysteine 206.

It belongs to the TtcA family. As to quaternary structure, homodimer. Mg(2+) is required as a cofactor. It depends on [4Fe-4S] cluster as a cofactor.

It localises to the cytoplasm. It catalyses the reaction cytidine(32) in tRNA + S-sulfanyl-L-cysteinyl-[cysteine desulfurase] + AH2 + ATP = 2-thiocytidine(32) in tRNA + L-cysteinyl-[cysteine desulfurase] + A + AMP + diphosphate + H(+). It functions in the pathway tRNA modification. Functionally, catalyzes the ATP-dependent 2-thiolation of cytidine in position 32 of tRNA, to form 2-thiocytidine (s(2)C32). The sulfur atoms are provided by the cysteine/cysteine desulfurase (IscS) system. The chain is tRNA-cytidine(32) 2-sulfurtransferase from Pseudomonas putida (strain ATCC 700007 / DSM 6899 / JCM 31910 / BCRC 17059 / LMG 24140 / F1).